A 351-amino-acid polypeptide reads, in one-letter code: 7,8-didemethyl-8-hydroxy-5-deazariboflavin synthase (351 aa).

One can recognise a Radical SAM core domain in the interval 35–275 (ITYSKNAFIP…EDISIQVPPN (241 aa)). The [4Fe-4S] cluster site is built by Cys-49, Cys-53, and Cys-56.

Belongs to the radical SAM superfamily. CofG family. As to quaternary structure, consists of two subunits, CofG and CofH. Requires [4Fe-4S] cluster as cofactor.

The catalysed reaction is 5-amino-5-(4-hydroxybenzyl)-6-(D-ribitylimino)-5,6-dihydrouracil + S-adenosyl-L-methionine = 7,8-didemethyl-8-hydroxy-5-deazariboflavin + 5'-deoxyadenosine + L-methionine + NH4(+) + H(+). The protein operates within cofactor biosynthesis; coenzyme F0 biosynthesis. Its function is as follows. Catalyzes the radical-mediated synthesis of 7,8-didemethyl-8-hydroxy-5-deazariboflavin from 5-amino-5-(4-hydroxybenzyl)-6-(D-ribitylimino)-5,6-dihydrouracil. The protein is 7,8-didemethyl-8-hydroxy-5-deazariboflavin synthase of Methanococcus vannielii (strain ATCC 35089 / DSM 1224 / JCM 13029 / OCM 148 / SB).